Here is a 676-residue protein sequence, read N- to C-terminus: ATP-dependent zinc metalloprotease FtsH (676 aa).

The Cytoplasmic portion of the chain corresponds to 1 to 12 (MSFFDKIFKKFH). The chain crosses the membrane as a helical span at residues 13 to 33 (MGVLYFAVILIGATFIYCYFT). At 34–115 (KHEKKDNNTF…DPRPWNGYEH (82 aa)) the chain is on the extracellular side. Residues 116-136 (VFWVFRQCLTMLFFYCFFLFF) form a helical membrane-spanning segment. Residues 137–676 (ADTIKQMGQE…EVLSTDSEQT (540 aa)) lie on the Cytoplasmic side of the membrane. 212-219 (GPPGTGKT) provides a ligand contact to ATP. His433 is a binding site for Zn(2+). Residue Glu434 is part of the active site. His437 and Asp509 together coordinate Zn(2+). The tract at residues 610-676 (EKEETNAPTQ…EVLSTDSEQT (67 aa)) is disordered. Positions 615 to 636 (NAPTQTTSQMSSNNETTNTDKT) are enriched in polar residues. Over residues 650 to 667 (NQESNESNPNNNEKASPE) the composition is skewed to low complexity.

The protein in the central section; belongs to the AAA ATPase family. This sequence in the C-terminal section; belongs to the peptidase M41 family. As to quaternary structure, homohexamer. Zn(2+) is required as a cofactor.

It localises to the cell membrane. Acts as a processive, ATP-dependent zinc metallopeptidase for both cytoplasmic and membrane proteins. Plays a role in the quality control of integral membrane proteins. The protein is ATP-dependent zinc metalloprotease FtsH of Aster yellows witches'-broom phytoplasma (strain AYWB).